A 237-amino-acid polypeptide reads, in one-letter code: Phosphoribosylaminoimidazole-succinocarboxamide synthase (237 aa).

Belongs to the SAICAR synthetase family.

It catalyses the reaction 5-amino-1-(5-phospho-D-ribosyl)imidazole-4-carboxylate + L-aspartate + ATP = (2S)-2-[5-amino-1-(5-phospho-beta-D-ribosyl)imidazole-4-carboxamido]succinate + ADP + phosphate + 2 H(+). It functions in the pathway purine metabolism; IMP biosynthesis via de novo pathway; 5-amino-1-(5-phospho-D-ribosyl)imidazole-4-carboxamide from 5-amino-1-(5-phospho-D-ribosyl)imidazole-4-carboxylate: step 1/2. This chain is Phosphoribosylaminoimidazole-succinocarboxamide synthase, found in Marinobacter nauticus (strain ATCC 700491 / DSM 11845 / VT8) (Marinobacter aquaeolei).